A 453-amino-acid polypeptide reads, in one-letter code: Tubulin gamma chain (453 aa).

142-148 (AGGTGSG) contacts GTP.

This sequence belongs to the tubulin family.

Its subcellular location is the cytoplasm. The protein localises to the cytoskeleton. The protein resides in the microtubule organizing center. It is found in the spindle pole body. In terms of biological role, tubulin is the major constituent of microtubules. The gamma chain is found at microtubule organizing centers (MTOC) such as the spindle poles or the centrosome, suggesting that it is involved in the minus-end nucleation of microtubule assembly. The sequence is that of Tubulin gamma chain (TUB4) from Coprinopsis cinerea (strain Okayama-7 / 130 / ATCC MYA-4618 / FGSC 9003) (Inky cap fungus).